We begin with the raw amino-acid sequence, 585 residues long: Probable ubiquitin carboxyl-terminal hydrolase 9 (585 aa).

The interval 1–23 (MSLLRWMGMNSPGSTDRRKSTWE) is disordered. Positions 41 to 424 (YGLTNYGNTC…TAYVLFYTAA (384 aa)) constitute a USP domain. Cys50 acts as the Nucleophile in catalysis. Residues 85–110 (CTKTNHPESSSSRHSKKKSMENRKSS) are disordered. The active-site Proton acceptor is the His375. Positions 447–470 (SQLKQESVEVSNLSSTPRSNSTIT) are enriched in polar residues. A disordered region spans residues 447–473 (SQLKQESVEVSNLSSTPRSNSTITYPD). Phosphoserine is present on Ser505. Disordered regions lie at residues 511–530 (FHSR…SRSF) and 540–585 (KFFG…RSKR). A compositionally biased stretch (polar residues) spans 542-551 (FGSSQSNSPK). Residue Ser549 is modified to Phosphoserine. Basic and acidic residues predominate over residues 553–570 (SPLRDTHKSSDEHSESKH). A compositionally biased stretch (polar residues) spans 574–585 (LPWQFSRSRSKR).

It belongs to the peptidase C19 family. As to quaternary structure, interacts with bun107 and bun62.

Its subcellular location is the nucleus. It is found in the cytoplasm. It localises to the cell tip. The enzyme catalyses Thiol-dependent hydrolysis of ester, thioester, amide, peptide and isopeptide bonds formed by the C-terminal Gly of ubiquitin (a 76-residue protein attached to proteins as an intracellular targeting signal).. Functionally, ubiquitin C-terminal hydrolase involved in regulating actin dynamics and/or endocytosis at cell tips and septa. This chain is Probable ubiquitin carboxyl-terminal hydrolase 9 (ubp9), found in Schizosaccharomyces pombe (strain 972 / ATCC 24843) (Fission yeast).